The following is a 498-amino-acid chain: Myocyte-specific enhancer factor 2D homolog (498 aa).

Residues Met1 to Glu100 are interaction with hdac9. The 55-residue stretch at Arg3–Tyr57 folds into the MADS-box domain. The segment at residues Ala58–Glu86 is a DNA-binding region (mef2-type). Disordered regions lie at residues Leu173–Gly215, Leu243–Lys267, and Ser411–Thr498. The segment covering Ile412–Ser424 has biased composition (basic and acidic residues). Composition is skewed to polar residues over residues Thr425–His434 and Asp447–Glu457.

It belongs to the MEF2 family. Binds DNA as a multimer, probably as a dimer. Interacts with hdac9. In terms of tissue distribution, restricted to the somitic mesoderm of early embryos and to the body muscle (myotomes) of the tadpole. Expressed in all tissues examined in the adult.

The protein localises to the nucleus. Its function is as follows. May regulate muscle-specific transcription in the embryo and may regulate transcription of a variety of cell types in the adult. It binds to the sequence 5'-CTA[TA]4TAR-3'. In Xenopus laevis (African clawed frog), this protein is Myocyte-specific enhancer factor 2D homolog (mef2d).